The sequence spans 299 residues: Regucalcin (299 aa).

Glutamate 18 contacts a divalent metal cation. Arginine 101, asparagine 103, and glutamate 121 together coordinate substrate. 2 residues coordinate a divalent metal cation: asparagine 154 and aspartate 204. The active-site Proton donor/acceptor is the aspartate 204. N6-succinyllysine is present on residues lysine 244 and lysine 253.

The protein belongs to the SMP-30/CGR1 family. As to quaternary structure, monomer. Requires Zn(2+) as cofactor. Mn(2+) is required as a cofactor. It depends on Ca(2+) as a cofactor. Mg(2+) serves as cofactor.

It localises to the cytoplasm. The enzyme catalyses D-glucono-1,5-lactone + H2O = D-gluconate + H(+). Its pathway is cofactor biosynthesis; L-ascorbate biosynthesis via UDP-alpha-D-glucuronate pathway; L-ascorbate from UDP-alpha-D-glucuronate: step 3/4. Gluconolactonase with low activity towards other sugar lactones, including gulonolactone and galactonolactone. Catalyzes a key step in ascorbic acid (vitamin C) biosynthesis. Can also hydrolyze diisopropyl phosphorofluoridate and phenylacetate (in vitro). Calcium-binding protein. Modulates Ca(2+) signaling, and Ca(2+)-dependent cellular processes and enzyme activities. The polypeptide is Regucalcin (RGN) (Sus scrofa (Pig)).